The following is a 308-amino-acid chain: ADP-L-glycero-D-manno-heptose-6-epimerase (308 aa).

NADP(+)-binding positions include 10 to 11 (FI), 31 to 32 (DN), lysine 38, lysine 53, 75 to 79 (EGACS), and asparagine 92. Catalysis depends on tyrosine 139, which acts as the Proton acceptor. Residue lysine 143 coordinates NADP(+). Position 168 (asparagine 168) interacts with substrate. 2 residues coordinate NADP(+): valine 169 and lysine 177. The Proton acceptor role is filled by lysine 177. Substrate-binding positions include serine 179, histidine 186, 200 to 203 (FAGS), arginine 208, and tyrosine 271.

It belongs to the NAD(P)-dependent epimerase/dehydratase family. HldD subfamily. As to quaternary structure, homopentamer. The cofactor is NADP(+).

The catalysed reaction is ADP-D-glycero-beta-D-manno-heptose = ADP-L-glycero-beta-D-manno-heptose. The protein operates within nucleotide-sugar biosynthesis; ADP-L-glycero-beta-D-manno-heptose biosynthesis; ADP-L-glycero-beta-D-manno-heptose from D-glycero-beta-D-manno-heptose 7-phosphate: step 4/4. In terms of biological role, catalyzes the interconversion between ADP-D-glycero-beta-D-manno-heptose and ADP-L-glycero-beta-D-manno-heptose via an epimerization at carbon 6 of the heptose. The protein is ADP-L-glycero-D-manno-heptose-6-epimerase of Haemophilus influenzae (strain 86-028NP).